A 187-amino-acid polypeptide reads, in one-letter code: Accessory gene regulator protein B (187 aa).

Transmembrane regions (helical) follow at residues 49 to 69, 82 to 102, 106 to 126, 144 to 164, and 166 to 186; these read ISIFLSVFLYTLVTHLSYMLI, ILCYIQSILIFVFVPYFLINI, FTYLLALSIIGLISVVIYAPA, VSIIMYLLVMILSLIIHPFYA, and FMLLGILVESITLLPIFFPKE.

This sequence belongs to the AgrB family.

The protein resides in the cell membrane. Functionally, essential for the production of a quorum sensing system signal molecule, the autoinducing peptide (AIP). This quorum sensing system is responsible for the regulation of the expression of virulence factor genes. Involved in the proteolytic processing of AgrD, the precursor of AIP. In Staphylococcus aureus (strain bovine RF122 / ET3-1), this protein is Accessory gene regulator protein B.